The chain runs to 344 residues: Protein pelota homolog (344 aa).

The protein belongs to the eukaryotic release factor 1 family. Pelota subfamily. In terms of assembly, monomer. The cofactor is a divalent metal cation.

It localises to the cytoplasm. Functionally, may function in recognizing stalled ribosomes, interact with stem-loop structures in stalled mRNA molecules, and effect endonucleolytic cleavage of the mRNA. May play a role in the release non-functional ribosomes and degradation of damaged mRNAs. Has endoribonuclease activity. The protein is Protein pelota homolog of Saccharolobus islandicus (strain Y.N.15.51 / Yellowstone #2) (Sulfolobus islandicus).